The following is a 496-amino-acid chain: Cytochrome P450 71D180 (496 aa).

Residues M1–M21 form a helical; Signal-anchor for type II membrane protein membrane-spanning segment. C435 is a heme binding site. The disordered stretch occupies residues M471–S496.

The protein belongs to the cytochrome P450 family. Heme is required as a cofactor. As to expression, mostly expressed in flowers and stems, and, to a lower extent, in leaves.

Its subcellular location is the membrane. It catalyses the reaction gamma-terpinene + 2 reduced [NADPH--hemoprotein reductase] + 2 O2 = carvacrol + 2 oxidized [NADPH--hemoprotein reductase] + 3 H2O + 2 H(+). It carries out the reaction (4S)-limonene + reduced [NADPH--hemoprotein reductase] + O2 = (1S,5R)-carveol + oxidized [NADPH--hemoprotein reductase] + H2O + H(+). The catalysed reaction is (4R)-limonene + reduced [NADPH--hemoprotein reductase] + O2 = (1R,5S)-carveol + oxidized [NADPH--hemoprotein reductase] + H2O + H(+). Its pathway is secondary metabolite biosynthesis; terpenoid biosynthesis. Involved in the biosynthesis of phenolic monoterpenes natural products thymol and carvacrol which have a broad range of biological activities acting as antimicrobial compounds, insecticides, antioxidants and pharmaceutical agents. Catalyzes the C2-hydroxylation of gamma-terpinene to produce carvacrol. Also mediates the C6-hydroxylation of (4S)-limonene and (4R)-limonene to form carveol. This chain is Cytochrome P450 71D180, found in Origanum vulgare (Wild marjoram).